The sequence spans 106 residues: Large ribosomal subunit protein eL42Q (106 aa).

This sequence belongs to the eukaryotic ribosomal protein eL42 family.

The protein is Large ribosomal subunit protein eL42Q (RIM-C) of Candida maltosa (Yeast).